The chain runs to 227 residues: Urease accessory protein UreF (227 aa).

This sequence belongs to the UreF family. In terms of assembly, ureD, UreF and UreG form a complex that acts as a GTP-hydrolysis-dependent molecular chaperone, activating the urease apoprotein by helping to assemble the nickel containing metallocenter of UreC. The UreE protein probably delivers the nickel.

It is found in the cytoplasm. Functionally, required for maturation of urease via the functional incorporation of the urease nickel metallocenter. The chain is Urease accessory protein UreF from Methylobacillus flagellatus (strain ATCC 51484 / DSM 6875 / VKM B-1610 / KT).